Here is a 205-residue protein sequence, read N- to C-terminus: Large ribosomal subunit protein uL4 (205 aa).

The disordered stretch occupies residues 56-76 (VSGTTAKPYRQKHTGRARQGS).

It belongs to the universal ribosomal protein uL4 family. In terms of assembly, part of the 50S ribosomal subunit.

Its function is as follows. One of the primary rRNA binding proteins, this protein initially binds near the 5'-end of the 23S rRNA. It is important during the early stages of 50S assembly. It makes multiple contacts with different domains of the 23S rRNA in the assembled 50S subunit and ribosome. Functionally, forms part of the polypeptide exit tunnel. The chain is Large ribosomal subunit protein uL4 from Ehrlichia ruminantium (strain Welgevonden).